The sequence spans 85 residues: DNA-directed RNA polymerase subunit omega (85 aa).

It belongs to the RNA polymerase subunit omega family. As to quaternary structure, the RNAP catalytic core consists of 2 alpha, 1 beta, 1 beta' and 1 omega subunit. When a sigma factor is associated with the core the holoenzyme is formed, which can initiate transcription.

It catalyses the reaction RNA(n) + a ribonucleoside 5'-triphosphate = RNA(n+1) + diphosphate. Its function is as follows. Promotes RNA polymerase assembly. Latches the N- and C-terminal regions of the beta' subunit thereby facilitating its interaction with the beta and alpha subunits. This is DNA-directed RNA polymerase subunit omega from Tropheryma whipplei (strain TW08/27) (Whipple's bacillus).